We begin with the raw amino-acid sequence, 100 residues long: Integration host factor subunit alpha (100 aa).

This sequence belongs to the bacterial histone-like protein family. In terms of assembly, heterodimer of an alpha and a beta chain.

This protein is one of the two subunits of integration host factor, a specific DNA-binding protein that functions in genetic recombination as well as in transcriptional and translational control. The protein is Integration host factor subunit alpha of Rhizorhabdus wittichii (strain DSM 6014 / CCUG 31198 / JCM 15750 / NBRC 105917 / EY 4224 / RW1) (Sphingomonas wittichii).